A 103-amino-acid polypeptide reads, in one-letter code: Small ribosomal subunit protein uS10 (103 aa).

This sequence belongs to the universal ribosomal protein uS10 family. In terms of assembly, part of the 30S ribosomal subunit.

Its function is as follows. Involved in the binding of tRNA to the ribosomes. The protein is Small ribosomal subunit protein uS10 of Neisseria gonorrhoeae (strain NCCP11945).